The sequence spans 290 residues: Short chain dehydrogenase andI (290 aa).

Residues Ile-35, Asn-120, Arg-154, Tyr-186, Lys-190, Val-219, and Thr-221 each coordinate NADP(+). Residue Tyr-186 is the Proton acceptor of the active site. Lys-190 serves as the catalytic Lowers pKa of active site Tyr.

It belongs to the short-chain dehydrogenases/reductases (SDR) family.

It functions in the pathway secondary metabolite biosynthesis; terpenoid biosynthesis. Its function is as follows. Short chain dehydrogenase; part of the gene cluster that mediates the biosynthesis of anditomin, a fungal meroterpenoid. The first step of the pathway is the synthesis of 3,5-dimethylorsellinic acid (DMOA) by the polyketide synthase andM. DMOA is then converted to the phthalide compound 5,7-dihydroxy-4,6-dimethylphthalide (DHDMP) by the cytochrome P450 monooxygenase andK, which is further prenylated by the prenyltransferase andD to yield farnesyl-DHDMP. Further epoxidation by the FAD-dependent monooxygenase andE leads to epoxyfarnesyl-DHDMP. The next step involves the terpene cyclase andB that converts epoxyfarnesyl-DHDMP into preandiloid A through opening of the epoxide ring followed by the cyclization of the farnesyl moiety. Preandiloid A is in turn oxidized at the C-3 hydroxyl group to yield preandiloid B by the dehydrogenase andC. The dioxygenase andA is solely responsible for the dehydrogenation of preandiloid B leading to the enone preandiloid C, as well as for the intriguing structural rearrangement to generate the bicyclo[2.2.2]octane core, transforming preandiloid C into andiconin. FAD-binding monooxygenase andJ then produces andilesin D which is reduced by dehydrogenase andI to yield andilesin A. Action of acetyltransferase andG followed by a spontaneous acetate elimination leads then to andilesin B, which is in turn substrate of the short chain dehydrogenase andH to yield andilesin C. Finally, the dioxygenase andF catalyzes the transformation of andilesin C to anditomin. In Emericella variicolor (Aspergillus stellatus), this protein is Short chain dehydrogenase andI.